The sequence spans 619 residues: MSRHFSSRSGFRSGGGFSSGSAGLVSFQRRTTSSSVRHSGGGGGRFSGGRCGGGGGGGAGGGGFGSRSLVNLGGSKSISISVAGGGGGRGGFGGGYGGGGFGGGGFGGGSGGFGLGGGFGGGGFGGGGFGGGGFGGGGFGGGSFGPVCPPGGIQEVTINQSLLQPLNVEIDPEIQKVKTREREQIKSLNNQFASFIDKVRFLEQQNQVLQTKWELLQQVDTSTRTHSLEPYFENYISNLRRRVDQLKSDQSRMDSELKNMQDLVEDYRNKYEDEINKRTNAENEFVTIKKDVDAAFMNKVDLQAKVDNLQQEIDFLTTLYQAELSQMQTQISETNVILSMDNNRSLDLDSIISEVKAQYEEIAQKSKAEAEALYQTKYEELQITAGKHGDNLKSTKMEISELNRVAQRLRSEIDSVKKQISALQQSISDAEQRGENALKDAQSKLAELEDALQKAKEDMARLLRDYQELMNTKLALDMEIATYRTLLEGEESRMSGECAPNVSVSVNTSHTTISGGGGRGGGGFGSVGGGGGYGGGSYGSGGGSYGSGGGGGGSYGSGGGGGGGYGSSSSSGGHRGGSGGGSRSGGSSGGRGSSSGGIKTSSGSSSVKFVSTSYSRAVR.

Residues 1-180 (MSRHFSSRSG…DPEIQKVKTR (180 aa)) form a head region. Arginine 12 is modified (omega-N-methylarginine). A phosphoserine mark is found at serine 18 and serine 21. The interval 28–49 (QRRTTSSSVRHSGGGGGRFSGG) is disordered. Gly residues predominate over residues 39–49 (SGGGGGRFSGG). At arginine 45 the chain carries Omega-N-methylarginine. At serine 68 the chain carries Phosphoserine. A coiled-coil region spans residues 173-477 (EIQKVKTRER…ELMNTKLALD (305 aa)). The interval 181–216 (EREQIKSLNNQFASFIDKVRFLEQQNQVLQTKWELL) is coil 1A. The 314-residue stretch at 181–494 (EREQIKSLNN…TLLEGEESRM (314 aa)) folds into the IF rod domain. Positions 217-235 (QQVDTSTRTHSLEPYFENY) are linker 1. Positions 236 to 327 (ISNLRRRVDQ…TLYQAELSQM (92 aa)) are coil 1B. The residue at position 277 (lysine 277) is an N6,N6-dimethyllysine. Residues 328 to 351 (QTQISETNVILSMDNNRSLDLDSI) form a linker 12 region. The residue at position 345 (serine 345) is a Phosphoserine. The tract at residues 352-490 (ISEVKAQYEE…ATYRTLLEGE (139 aa)) is coil 2. The segment at 491 to 619 (ESRMSGECAP…VSTSYSRAVR (129 aa)) is tail. Omega-N-methylarginine is present on residues arginine 519 and arginine 575. The interval 559 to 619 (GGGGGGYGSS…VSTSYSRAVR (61 aa)) is disordered. A compositionally biased stretch (gly residues) spans 573–595 (GHRGGSGGGSRSGGSSGGRGSSS). A compositionally biased stretch (low complexity) spans 596 to 606 (GGIKTSSGSSS). Residues 607–619 (VKFVSTSYSRAVR) are compositionally biased toward polar residues.

This sequence belongs to the intermediate filament family. Heterotetramer of two type I and two type II keratins. Heterodimer with KRT10. Two heterodimers of KRT1 and KRT10 form a heterotetramer. Forms a heterodimer with KRT14; the interaction is more abundant in the absence of KRT5. Interacts with ITGB1 in the presence of RACK1 and SRC, and with RACK1. Interacts with C1QBP; the association represents a cell surface kininogen receptor. Interacts with EPPK1; interaction is dependent of higher-order structure of intermediate filament. Undergoes deimination of some arginine residues (citrullination).

It is found in the cell membrane. The protein resides in the cytoplasm. May regulate the activity of kinases such as PKC and SRC via binding to integrin beta-1 (ITB1) and the receptor of activated protein C kinase 1 (RACK1). In complex with C1QBP is a high affinity receptor for kininogen-1/HMWK. The protein is Keratin, type II cytoskeletal 1 of Canis lupus familiaris (Dog).